Here is a 464-residue protein sequence, read N- to C-terminus: Argininosuccinate lyase (464 aa).

It belongs to the lyase 1 family. Argininosuccinate lyase subfamily.

The protein localises to the cytoplasm. The enzyme catalyses 2-(N(omega)-L-arginino)succinate = fumarate + L-arginine. Its pathway is amino-acid biosynthesis; L-arginine biosynthesis; L-arginine from L-ornithine and carbamoyl phosphate: step 3/3. This is Argininosuccinate lyase from Pseudomonas putida (strain GB-1).